A 453-amino-acid polypeptide reads, in one-letter code: Bifunctional protein GlmU (453 aa).

The pyrophosphorylase stretch occupies residues 1–225; that stretch reads MHAHVILAAG…AEEALGVNTR (225 aa). UDP-N-acetyl-alpha-D-glucosamine-binding positions include 7 to 10, lysine 21, glutamine 72, and 77 to 78; these read LAAG and GT. Aspartate 102 contributes to the Mg(2+) binding site. 4 residues coordinate UDP-N-acetyl-alpha-D-glucosamine: glycine 138, glutamate 152, asparagine 167, and asparagine 223. Asparagine 223 is a binding site for Mg(2+). The segment at 226 to 246 is linker; sequence EELARVEGVLLRRLRAEWMGK. Residues 247 to 453 are N-acetyltransferase; that stretch reads GVRMILPETI…GYALRKLGEG (207 aa). Residues arginine 329 and lysine 347 each contribute to the UDP-N-acetyl-alpha-D-glucosamine site. Catalysis depends on histidine 359, which acts as the Proton acceptor. Residues tyrosine 362 and asparagine 373 each coordinate UDP-N-acetyl-alpha-D-glucosamine. Acetyl-CoA-binding positions include alanine 376, 382–383, serine 401, alanine 419, and arginine 436; that span reads NY.

The protein in the N-terminal section; belongs to the N-acetylglucosamine-1-phosphate uridyltransferase family. It in the C-terminal section; belongs to the transferase hexapeptide repeat family. As to quaternary structure, homotrimer. Requires Mg(2+) as cofactor.

The protein localises to the cytoplasm. It catalyses the reaction alpha-D-glucosamine 1-phosphate + acetyl-CoA = N-acetyl-alpha-D-glucosamine 1-phosphate + CoA + H(+). It carries out the reaction N-acetyl-alpha-D-glucosamine 1-phosphate + UTP + H(+) = UDP-N-acetyl-alpha-D-glucosamine + diphosphate. Its pathway is nucleotide-sugar biosynthesis; UDP-N-acetyl-alpha-D-glucosamine biosynthesis; N-acetyl-alpha-D-glucosamine 1-phosphate from alpha-D-glucosamine 6-phosphate (route II): step 2/2. It participates in nucleotide-sugar biosynthesis; UDP-N-acetyl-alpha-D-glucosamine biosynthesis; UDP-N-acetyl-alpha-D-glucosamine from N-acetyl-alpha-D-glucosamine 1-phosphate: step 1/1. It functions in the pathway bacterial outer membrane biogenesis; LPS lipid A biosynthesis. In terms of biological role, catalyzes the last two sequential reactions in the de novo biosynthetic pathway for UDP-N-acetylglucosamine (UDP-GlcNAc). The C-terminal domain catalyzes the transfer of acetyl group from acetyl coenzyme A to glucosamine-1-phosphate (GlcN-1-P) to produce N-acetylglucosamine-1-phosphate (GlcNAc-1-P), which is converted into UDP-GlcNAc by the transfer of uridine 5-monophosphate (from uridine 5-triphosphate), a reaction catalyzed by the N-terminal domain. In Thermus thermophilus (strain ATCC 27634 / DSM 579 / HB8), this protein is Bifunctional protein GlmU.